We begin with the raw amino-acid sequence, 421 residues long: UDP-N-acetylglucosamine 1-carboxyvinyltransferase (421 aa).

Phosphoenolpyruvate is bound at residue 22–23; that stretch reads KN. Arg93 lines the UDP-N-acetyl-alpha-D-glucosamine pocket. The active-site Proton donor is the Cys117. Cys117 bears the 2-(S-cysteinyl)pyruvic acid O-phosphothioketal mark. UDP-N-acetyl-alpha-D-glucosamine-binding positions include 122 to 126, Asp308, and Ile330; that span reads RPVDL.

The protein belongs to the EPSP synthase family. MurA subfamily.

The protein resides in the cytoplasm. The enzyme catalyses phosphoenolpyruvate + UDP-N-acetyl-alpha-D-glucosamine = UDP-N-acetyl-3-O-(1-carboxyvinyl)-alpha-D-glucosamine + phosphate. The protein operates within cell wall biogenesis; peptidoglycan biosynthesis. Its function is as follows. Cell wall formation. Adds enolpyruvyl to UDP-N-acetylglucosamine. This Pseudomonas putida (strain W619) protein is UDP-N-acetylglucosamine 1-carboxyvinyltransferase.